We begin with the raw amino-acid sequence, 317 residues long: Tyrosine--tRNA ligase (317 aa).

L-tyrosine is bound at residue tyrosine 33. Residues 38–46 (PSGKIHMGH) carry the 'HIGH' region motif. Residues tyrosine 155, glutamine 159, aspartate 162, and glutamine 177 each coordinate L-tyrosine. The short motif at 211–215 (KMASS) is the 'KMSKS' region element. Residue serine 214 participates in ATP binding.

The protein belongs to the class-I aminoacyl-tRNA synthetase family. TyrS type 3 subfamily. As to quaternary structure, homodimer.

The protein resides in the cytoplasm. It carries out the reaction tRNA(Tyr) + L-tyrosine + ATP = L-tyrosyl-tRNA(Tyr) + AMP + diphosphate + H(+). Functionally, catalyzes the attachment of tyrosine to tRNA(Tyr) in a two-step reaction: tyrosine is first activated by ATP to form Tyr-AMP and then transferred to the acceptor end of tRNA(Tyr). In Methanosarcina barkeri (strain Fusaro / DSM 804), this protein is Tyrosine--tRNA ligase.